Consider the following 233-residue polypeptide: Small ribosomal subunit protein uS2 (233 aa).

The protein belongs to the universal ribosomal protein uS2 family.

This is Small ribosomal subunit protein uS2 from Clostridium botulinum (strain Alaska E43 / Type E3).